Here is a 607-residue protein sequence, read N- to C-terminus: Arginine--tRNA ligase, cytoplasmic (607 aa).

Residue alanine 2 is modified to N-acetylalanine. Serine 15 carries the post-translational modification Phosphoserine. Interaction with tRNA stretches follow at residues 59–60 (EW) and 106–111 (NGPFIQ). Residues 148–153 (EFSSPN), histidine 162, tyrosine 347, aspartate 351, and glutamine 375 contribute to the L-arginine site. The short motif at 151-162 (SPNIAKPFHAGH) is the 'HIGH' region element. Residues 484-498 (DTGPYLQYAHSRLRS) are interaction with tRNA.

It belongs to the class-I aminoacyl-tRNA synthetase family. As to quaternary structure, monomer.

It localises to the cytoplasm. Its subcellular location is the cytosol. It carries out the reaction tRNA(Arg) + L-arginine + ATP = L-arginyl-tRNA(Arg) + AMP + diphosphate. Functionally, forms part of a macromolecular complex that catalyzes the attachment of specific amino acids to cognate tRNAs during protein synthesis. This chain is Arginine--tRNA ligase, cytoplasmic, found in Saccharomyces cerevisiae (strain ATCC 204508 / S288c) (Baker's yeast).